The primary structure comprises 370 residues: Aminomethyltransferase (370 aa).

Belongs to the GcvT family. As to quaternary structure, the glycine cleavage system is composed of four proteins: P, T, L and H.

The catalysed reaction is N(6)-[(R)-S(8)-aminomethyldihydrolipoyl]-L-lysyl-[protein] + (6S)-5,6,7,8-tetrahydrofolate = N(6)-[(R)-dihydrolipoyl]-L-lysyl-[protein] + (6R)-5,10-methylene-5,6,7,8-tetrahydrofolate + NH4(+). In terms of biological role, the glycine cleavage system catalyzes the degradation of glycine. This is Aminomethyltransferase from Leptospira biflexa serovar Patoc (strain Patoc 1 / Ames).